The chain runs to 478 residues: ATP synthase subunit beta (478 aa).

161 to 168 (GGAGVGKT) contributes to the ATP binding site.

The protein belongs to the ATPase alpha/beta chains family. In terms of assembly, F-type ATPases have 2 components, CF(1) - the catalytic core - and CF(0) - the membrane proton channel. CF(1) has five subunits: alpha(3), beta(3), gamma(1), delta(1), epsilon(1). CF(0) has four main subunits: a(1), b(1), b'(1) and c(9-12).

Its subcellular location is the cell inner membrane. The enzyme catalyses ATP + H2O + 4 H(+)(in) = ADP + phosphate + 5 H(+)(out). Functionally, produces ATP from ADP in the presence of a proton gradient across the membrane. The catalytic sites are hosted primarily by the beta subunits. The protein is ATP synthase subunit beta of Gloeobacter violaceus (strain ATCC 29082 / PCC 7421).